The sequence spans 630 residues: MSIPEESEINKDYTVQEDLDEFAKYTCVYKKRHDEKIEYITAQHDWNPVYEAVVPRKSKPGKDEKREGFMYPILRWPLMFTAFLCLTFVAFLYLLDRLYINCYEYFIVWRGEARRLRKLLQEAKTYEEWKERARALDKYFGNDEWKLDPVYDYYDYTLVQAVYSSLVKHREQKDWNALKSVLDVCVRSNFGGIDSSMLYSRTYSGTKKLVEDYVNELKVCLETVIDQRLYTAQERSKMFEYFSHNYGRTALCLSGGASFAIYHTGVLRALLNQDLIPNVITGTSGGGLLAALVCTRTNEELKQLLVPELASKYQSDIGNWLDATKRYFRTGARFDEILWAKTCMYFTRGSLTFAEAYKRTGRILNISVIPSDVHSPPKLINYLTSPDTVIWSAVIASCAVPGILNPIPLMTRSQSHRLIPHNFGNRFKDGSLRTDIPLSELRTQFNVHFSIVSQTNPHVQVFFFSPRGTVGRPVSHRKGRGWRGGYVGSAIEQFLKYDMIKWLHVIRSLELLPRPLGTDWSSVFLQKFDGTITIWPKTKFQDFYYILSPPSVERLGYMIDAGQAATFPKLDFIAARMTIEKLIEKGRMMDKPSKLGRSIDGTIGTSMSRGDIEISQESASISPEDIDIVN.

A PNPLA domain is found at 251 to 442 (LCLSGGASFA…RTDIPLSELR (192 aa)). The short motif at 282–286 (GTSGG) is the GXSXG element. Ser284 (nucleophile) is an active-site residue. Residue Asp429 is the Proton acceptor of the active site.

It belongs to the PLPL family.

Its subcellular location is the lipid droplet. It carries out the reaction a triacylglycerol + H2O = a diacylglycerol + a fatty acid + H(+). Its function is as follows. Lipid particle-localized triacylglycerol (TAG) lipase. The lipid droplet/particle is a lipid storage compartment which serves as a depot of energy and building blocks for membrane lipid biosynthesis. Involved in the mobilization of the non-polar storage lipids triacylglycerols (TAGs) from lipid particles by hydrolysis of TAGs, releasing and supplying specific fatty acids to the appropriate metabolic pathways. The protein is Triacylglycerol lipase ptl2 (ptl2) of Schizosaccharomyces pombe (strain 972 / ATCC 24843) (Fission yeast).